Reading from the N-terminus, the 314-residue chain is Ornithine carbamoyltransferase (314 aa).

Carbamoyl phosphate-binding positions include 58-61, Gln85, Arg109, and 136-139; these read STRT and HPLQ. L-ornithine contacts are provided by residues Asn168, Asp232, and 236-237; that span reads SM. Carbamoyl phosphate contacts are provided by residues 272-273 and Arg300; that span reads CL.

It belongs to the aspartate/ornithine carbamoyltransferase superfamily. OTCase family.

Its subcellular location is the cytoplasm. The catalysed reaction is carbamoyl phosphate + L-ornithine = L-citrulline + phosphate + H(+). Its pathway is amino-acid biosynthesis; L-arginine biosynthesis; L-arginine from L-ornithine and carbamoyl phosphate: step 1/3. Its function is as follows. Reversibly catalyzes the transfer of the carbamoyl group from carbamoyl phosphate (CP) to the N(epsilon) atom of ornithine (ORN) to produce L-citrulline. This is Ornithine carbamoyltransferase from Hyperthermus butylicus (strain DSM 5456 / JCM 9403 / PLM1-5).